A 352-amino-acid polypeptide reads, in one-letter code: C-X-C chemokine receptor type 4 (352 aa).

Residues 1-21 form an important for chemokine binding and signaling region; that stretch reads MEGISIYTSDNYTEEMGSGDY. Residues 1–38 lie on the Extracellular side of the membrane; sequence MEGISIYTSDNYTEEMGSGDYDSIKEPCFREENAHFNR. Tyr7 is subject to Sulfotyrosine. An N-linked (GlcNAc...) asparagine glycan is attached at Asn11. Tyr12 carries the post-translational modification Sulfotyrosine. The O-linked (Xyl...) (chondroitin sulfate) serine glycan is linked to Ser18. A Sulfotyrosine modification is found at Tyr21. 2 disulfides stabilise this stretch: Cys28-Cys274 and Cys109-Cys186. Residues 39–63 form a helical membrane-spanning segment; that stretch reads IFLPTIYSIIFLTGIVGNGLVILVM. Residues 64–77 are Cytoplasmic-facing; sequence GYQKKLRSMTDKYR. Residues 78–99 traverse the membrane as a helical segment; sequence LHLSVADLLFVITLPFWAVDAV. Residues 94–97 form a chemokine binding region; it reads WAVD. At 100–110 the chain is on the extracellular side; that stretch reads ANWYFGNFLCK. Residues 111 to 130 form a helical membrane-spanning segment; sequence AVHVIYTVNLYSSVLILAFI. Residues 113-117 are chemokine binding; it reads HVIYT. The Cytoplasmic portion of the chain corresponds to 131 to 154; sequence SLDRYLAIVHATNSQKPRKLLAEK. The short motif at 133–135 is the Important for signaling element; that stretch reads DRY. Residues 135–147 are involved in dimerization; when bound to chemokine; it reads YLAIVHATNSQKP. Residues 155-174 traverse the membrane as a helical segment; that stretch reads VVYVGVWIPALLLTIPDFIF. At 175-195 the chain is on the extracellular side; sequence ASVSEADDRYICDRFYPNDLW. Residues 186–190 are chemokine binding, important for signaling; the sequence is CDRFY. The interval 191-210 is involved in dimerization; that stretch reads PNDLWVVVFQFQHIMVGLIL. The chain crosses the membrane as a helical span at residues 196–216; the sequence is VVVFQFQHIMVGLILPGIVIL. The Cytoplasmic segment spans residues 217–241; sequence SCYCIIISKLSHSKGHQKGKALKTT. A helical membrane pass occupies residues 242-261; that stretch reads VILILAFFACWLPYYIGISI. The Extracellular portion of the chain corresponds to 262-282; it reads DSFILLEIIKQGCEFENTVHK. Residues 266-268 form an involved in dimerization region; sequence LLE. A helical transmembrane segment spans residues 283-302; that stretch reads WISITEALAFFHCCLNPILY. Residues 303 to 352 lie on the Cytoplasmic side of the membrane; sequence AFLGAKFKTSAQHALTSVSRGSSLKILSKGKRGGHSSVSTESESSSFHSS. Phosphoserine occurs at positions 319 and 321. Phosphoserine; by PKC and GRK6 occurs at positions 324 and 325. The segment at 329 to 352 is disordered; the sequence is LSKGKRGGHSSVSTESESSSFHSS. Ser330 bears the Phosphoserine; by GRK6 mark. Lys331 is covalently cross-linked (Glycyl lysine isopeptide (Lys-Gly) (interchain with G-Cter in ubiquitin)). The span at 337 to 352 shows a compositional bias: low complexity; the sequence is HSSVSTESESSSFHSS. Position 339 is a phosphoserine; by GRK6 (Ser339). Phosphoserine is present on residues Ser348 and Ser351.

The protein belongs to the G-protein coupled receptor 1 family. In terms of assembly, monomer. Can form homodimers. Interacts with CD164. Interacts with ARRB2; the interaction is dependent on the C-terminal phosphorylation of CXCR4 and allows activation of MAPK1 and MAPK3. Interacts with ARR3; the interaction is dependent on the C-terminal phosphorylation of CXCR4 and modulates calcium mobilization. Interacts with RNF113A; the interaction, enhanced by CXCL12, promotes CXCR4 ubiquitination and subsequent degradation. Interacts (via the cytoplasmic C-terminal) with ITCH (via the WW domains I and II); the interaction, enhanced by CXCL12, promotes CXCR4 ubiquitination and leads to its degradation. Interacts with extracellular ubiquitin. Interacts with DBN1; this interaction is enhanced by antigenic stimulation. Following LPS binding, may form a complex with GDF5, HSP90AA1 and HSPA8. Phosphorylated on agonist stimulation. Rapidly phosphorylated on serine and threonine residues in the C-terminal. Phosphorylation at Ser-324 and Ser-325 leads to recruitment of ITCH, ubiquitination and protein degradation. Post-translationally, ubiquitinated after ligand binding, leading to its degradation. Ubiquitinated by ITCH at the cell membrane on agonist stimulation. The ubiquitin-dependent mechanism, endosomal sorting complex required for transport (ESCRT), then targets CXCR4 for lysosomal degradation. This process is dependent also on prior Ser-/Thr-phosphorylation in the C-terminal of CXCR4. Also binding of ARRB1 to STAM negatively regulates CXCR4 sorting to lysosomes though modulating ubiquitination of SFR5S. In terms of processing, sulfation is required for efficient binding of CXCL12/SDF-1alpha and promotes its dimerization. O- and N-glycosylated. N-glycosylation can mask coreceptor function. The O-glycosylation chondroitin sulfate attachment does not affect interaction with CXCL12/SDF-1alpha nor its coreceptor activity.

The protein localises to the cell membrane. It is found in the cell junction. It localises to the early endosome. The protein resides in the late endosome. Its subcellular location is the lysosome. Functionally, receptor for the C-X-C chemokine CXCL12/SDF-1 that transduces a signal by increasing intracellular calcium ion levels and enhancing MAPK1/MAPK3 activation. Involved in the AKT signaling cascade. Plays a role in regulation of cell migration, e.g. during wound healing. Acts as a receptor for extracellular ubiquitin; leading to enhanced intracellular calcium ions and reduced cellular cAMP levels. Binds bacterial lipopolysaccharide (LPS) et mediates LPS-induced inflammatory response, including TNF secretion by monocytes. Involved in hematopoiesis and in cardiac ventricular septum formation. Also plays an essential role in vascularization of the gastrointestinal tract, probably by regulating vascular branching and/or remodeling processes in endothelial cells. Involved in cerebellar development. In the CNS, could mediate hippocampal-neuron survival. The sequence is that of C-X-C chemokine receptor type 4 (CXCR4) from Chlorocebus aethiops (Green monkey).